The sequence spans 317 residues: Ornithine carbamoyltransferase (317 aa).

Carbamoyl phosphate-binding positions include 54 to 57 (STRT), Gln81, Arg105, and 132 to 135 (HPCQ). L-ornithine is bound by residues Asn163, Asp227, and 231 to 232 (SM). Residues 267–268 (CL) and Arg295 contribute to the carbamoyl phosphate site.

It belongs to the aspartate/ornithine carbamoyltransferase superfamily. OTCase family.

The protein resides in the cytoplasm. The enzyme catalyses carbamoyl phosphate + L-ornithine = L-citrulline + phosphate + H(+). It participates in amino-acid biosynthesis; L-arginine biosynthesis; L-arginine from L-ornithine and carbamoyl phosphate: step 1/3. Its function is as follows. Reversibly catalyzes the transfer of the carbamoyl group from carbamoyl phosphate (CP) to the N(epsilon) atom of ornithine (ORN) to produce L-citrulline. The chain is Ornithine carbamoyltransferase from Parafrankia sp. (strain EAN1pec).